The sequence spans 578 residues: Glutathione hydrolase 2 (578 aa).

An N-terminal signal peptide occupies residues 1 to 26; the sequence is MNSFMSLVRTATIALLLIAFLQNANA. Asparagine 94 carries an N-linked (GlcNAc...) asparagine glycan. Arginine 103 serves as a coordination point for L-glutamate. N-linked (GlcNAc...) asparagine glycosylation is found at asparagine 176 and asparagine 227. Residue threonine 374 is the Nucleophile of the active site. Residues threonine 392, asparagine 394, glutamate 413, aspartate 416, 446–447, and 467–468 each bind L-glutamate; these read SS and GG. N-linked (GlcNAc...) asparagine glycosylation occurs at asparagine 511.

The protein belongs to the gamma-glutamyltransferase family. As to expression, expressed in roots, immature trichomes and pollen. In developing siliques, specifically expressed in the embryo, endosperm, outer integument and a small portion of the funiculus.

Its subcellular location is the secreted. The protein resides in the extracellular space. It is found in the apoplast. It carries out the reaction an N-terminal (5-L-glutamyl)-[peptide] + an alpha-amino acid = 5-L-glutamyl amino acid + an N-terminal L-alpha-aminoacyl-[peptide]. The catalysed reaction is glutathione + H2O = L-cysteinylglycine + L-glutamate. The enzyme catalyses an S-substituted glutathione + H2O = an S-substituted L-cysteinylglycine + L-glutamate. Its pathway is sulfur metabolism; glutathione metabolism. Functionally, may be required for glutathione transport into developing seeds. In Arabidopsis thaliana (Mouse-ear cress), this protein is Glutathione hydrolase 2 (GGT2).